A 415-amino-acid chain; its full sequence is Serine hydroxymethyltransferase (415 aa).

(6S)-5,6,7,8-tetrahydrofolate-binding positions include leucine 117 and 121–123 (GHL). At lysine 226 the chain carries N6-(pyridoxal phosphate)lysine. Residue glutamate 241 coordinates (6S)-5,6,7,8-tetrahydrofolate.

Belongs to the SHMT family. In terms of assembly, homodimer. Requires pyridoxal 5'-phosphate as cofactor.

The protein localises to the cytoplasm. It catalyses the reaction (6R)-5,10-methylene-5,6,7,8-tetrahydrofolate + glycine + H2O = (6S)-5,6,7,8-tetrahydrofolate + L-serine. It participates in one-carbon metabolism; tetrahydrofolate interconversion. The protein operates within amino-acid biosynthesis; glycine biosynthesis; glycine from L-serine: step 1/1. Its function is as follows. Catalyzes the reversible interconversion of serine and glycine with tetrahydrofolate (THF) serving as the one-carbon carrier. This reaction serves as the major source of one-carbon groups required for the biosynthesis of purines, thymidylate, methionine, and other important biomolecules. Also exhibits THF-independent aldolase activity toward beta-hydroxyamino acids, producing glycine and aldehydes, via a retro-aldol mechanism. This chain is Serine hydroxymethyltransferase, found in Bacillus subtilis (strain 168).